The sequence spans 467 residues: MSKGTLFDKVWDAHTVQILPSGQTQLFIGLHLIHEVTSPQAFAMLRERGLTVLYPDRTVATVDHIVPTEDQARPFVDTLAEEMMQALENSAKENGIRFYNIGSGNQGIVHVIAPEQGLTQPGMTIACGDSHTSTHGAFGAIAFGIGTSQVRDVLASQTLALSKLKVRKIEVNGTLPPGVYAKDVILHIIRKLGVKGGVGYAYEYAGTTFANMSMEERMTVCNMSIEGGARCGYINPDDITFDYLKGRDFAPTGDDWDKAVTWWRSMASDADAEYDDVVTFDASDIEPTVTWGITPGQGIGISEPVPTPESLPESDRAIAQEAYSYMQLSPGTPIKGTKVDVCFIGSCTNGRISDLREAAKFAKGHHVANGVKAFVVPGSERVKVQAEAEGLHKIFLEAGFEWREAGCSMCLAMNPDKLQGDQISASSSNRNFKGRQGSSTGRTLLMSPAMVVAAAVNGKVSDVRELS.

3 residues coordinate [4Fe-4S] cluster: Cys-347, Cys-407, and Cys-410.

This sequence belongs to the aconitase/IPM isomerase family. LeuC type 1 subfamily. Heterodimer of LeuC and LeuD. Requires [4Fe-4S] cluster as cofactor.

The enzyme catalyses (2R,3S)-3-isopropylmalate = (2S)-2-isopropylmalate. Its pathway is amino-acid biosynthesis; L-leucine biosynthesis; L-leucine from 3-methyl-2-oxobutanoate: step 2/4. In terms of biological role, catalyzes the isomerization between 2-isopropylmalate and 3-isopropylmalate, via the formation of 2-isopropylmaleate. This is 3-isopropylmalate dehydratase large subunit from Crocosphaera subtropica (strain ATCC 51142 / BH68) (Cyanothece sp. (strain ATCC 51142)).